Consider the following 650-residue polypeptide: SPARC-like protein 1 (650 aa).

Positions 1 to 16 (MKAVLLLLCALGTAVA) are cleaved as a signal peptide. The interval 51–352 (TADIENHPSD…HGAGDDYFIP (302 aa)) is disordered. Residues 54–64 (IENHPSDKAEK) show a composition bias toward basic and acidic residues. 3 positions are modified to phosphoserine: Ser-70, Ser-78, and Ser-86. Basic and acidic residues predominate over residues 75–85 (HEQSTEQDKTY). The span at 91–101 (LKDEEDGDGDL) shows a compositional bias: acidic residues. Polar residues-rich tracts occupy residues 116–126 (EGTSEPQQKSL) and 135–148 (TVST…QRAN). An N-linked (GlcNAc...) asparagine glycan is attached at Asn-148. A phosphoserine mark is found at Ser-155 and Ser-163. The span at 157–174 (EQPVSDSHQQPNESSKQT) shows a compositional bias: polar residues. Residue Asn-168 is glycosylated (N-linked (GlcNAc...) asparagine). A compositionally biased stretch (acidic residues) spans 189-210 (IPNEEEEEEEDEEEEEEEEPED). The residue at position 272 (Ser-272) is a Phosphoserine. A compositionally biased stretch (basic and acidic residues) spans 277-299 (EDKAAGSKEHIPHTEQQDQEGKA). At Ser-353 the chain carries Phosphoserine. The tract at residues 375 to 415 (EETTTGESENRREAADNQEAKKAESSPNAEPSDEGNSREHS) is disordered. The segment covering 382–398 (SENRREAADNQEAKKAE) has biased composition (basic and acidic residues). Position 406 is a phosphoserine (Ser-406). The 23-residue stretch at 418–440 (SCTNFQCKRGHICKTDPQGKPHC) folds into the Follistatin-like domain. Disulfide bonds link Cys-419-Cys-430, Cys-424-Cys-440, Cys-442-Cys-476, Cys-448-Cys-469, Cys-458-Cys-495, Cys-501-Cys-612, and Cys-620-Cys-636. Residues 436–497 (GKPHCVCQDP…QLDYFGACKS (62 aa)) enclose the Kazal-like domain. N-linked (GlcNAc...) asparagine glycosylation is present at Asn-462. Positions 608 to 643 (PMEHCITRFFEECDPNKDKHITLKEWGHCFGIKEED) constitute an EF-hand domain. Residues Asp-621, Asn-623, Asp-625, His-627, and Glu-632 each coordinate Ca(2+).

It belongs to the SPARC family. Highest expression in brain. Moderate levels in heart, adrenal gland, epididymis and lung. Low levels in kidney, eye, liver, spleen, submandibular gland and testis.

It localises to the secreted. The protein resides in the extracellular space. Its subcellular location is the extracellular matrix. This is SPARC-like protein 1 (Sparcl1) from Mus musculus (Mouse).